The following is a 306-amino-acid chain: Secreted RxLR effector protein 76 (306 aa).

Positions 1–21 (MSGAFYVFTALLLVASDQIAA) are cleaved as a signal peptide. Positions 48 to 65 (RFLRGSRDEPDNLANEER) match the RxLR-dEER motif. A disordered region spans residues 105-142 (AAKAVKKRPRGAKAGRKMPRAAEAEAVKKVPRAGTAVK). Residues 107–123 (KAVKKRPRGAKAGRKMP) show a composition bias toward basic residues.

This sequence belongs to the RxLR effector family.

The protein resides in the secreted. Its subcellular location is the host nucleus. Secreted effector that partially suppresses the host cell death induced by cell death-inducing proteins. This is Secreted RxLR effector protein 76 from Plasmopara viticola (Downy mildew of grapevine).